Consider the following 312-residue polypeptide: Glyoxylate/hydroxypyruvate reductase A (312 aa).

Residue Arg227 is part of the active site. His275 acts as the Proton donor in catalysis.

Belongs to the D-isomer specific 2-hydroxyacid dehydrogenase family. GhrA subfamily.

The protein resides in the cytoplasm. The catalysed reaction is glycolate + NADP(+) = glyoxylate + NADPH + H(+). It carries out the reaction (R)-glycerate + NAD(+) = 3-hydroxypyruvate + NADH + H(+). It catalyses the reaction (R)-glycerate + NADP(+) = 3-hydroxypyruvate + NADPH + H(+). Functionally, catalyzes the NADPH-dependent reduction of glyoxylate and hydroxypyruvate into glycolate and glycerate, respectively. The protein is Glyoxylate/hydroxypyruvate reductase A of Escherichia fergusonii (strain ATCC 35469 / DSM 13698 / CCUG 18766 / IAM 14443 / JCM 21226 / LMG 7866 / NBRC 102419 / NCTC 12128 / CDC 0568-73).